The following is a 257-amino-acid chain: Glutamate racemase (257 aa).

Substrate is bound by residues 12–13 and 44–45; these read DS and YG. Cys75 acts as the Proton donor/acceptor in catalysis. 76 to 77 lines the substrate pocket; the sequence is NT. Residue Cys185 is the Proton donor/acceptor of the active site. Substrate is bound at residue 186 to 187; sequence TH.

It belongs to the aspartate/glutamate racemases family.

It catalyses the reaction L-glutamate = D-glutamate. It functions in the pathway cell wall biogenesis; peptidoglycan biosynthesis. In terms of biological role, provides the (R)-glutamate required for cell wall biosynthesis. The protein is Glutamate racemase of Clostridium botulinum (strain Kyoto / Type A2).